Reading from the N-terminus, the 675-residue chain is MEPAMPEHDGDHASNPPHGVGIPNDSAGIVQTIEQARSEGHTHEIGGGEEGSGHERPAGMGALLAVLGVVYGDIGTSPLYALQSSVSIVSSPKAPAQPWEIMGLASLTFWALMLIVTIKYVILIMRADHDGEGGIIALMSLAQRVCKSQHFRWLFGLVGIAGTCLFFGDSIITPAISVLSAVEGIETSVPSASHIIIPLAMVVLVALFSVQVLGTGKIGKAFGPIMVCWFSVLAILGIKGIFLYPHILLALSPTFALEFIVLHGYLSFIALGSVVLSVTGAEALYADMGHFGRAPIRKAWLFFVLPSLTLNYFGQAALLIRDPHALSNPFYLLVPHWAQIPMLVLATFATVIASQAGISGSFSLCRQLIQLGYLPRTRIMHTNASEEAQIYLPSLNWILAFGALVLVLAFRTSSALAAAYGIAVTGTFLCTCVLAMVVFRRVFKWKSATVAIVFGFFFIVDSIFFSANVLKIPDGGWVPLAIGIISTIIMTTWKRGRSLIAARQQADSMPMGSFLARLPQSRTIRVPGLAVFLTANPDIVPNSLLHNLKHNKVLHDHILFVTVENLDQPEAERGHRAIVQELAPNIHRVIVRYGFMEMPNLPRALLELNALGVAFDAIQASYFTSHELVVRSRVPKMQLWRMWIFLFLLRNAASTTEFLRIPPDRVVEFGVRIAI.

Basic and acidic residues predominate over residues 1-12; it reads MEPAMPEHDGDH. The disordered stretch occupies residues 1–25; it reads MEPAMPEHDGDHASNPPHGVGIPND. A run of 12 helical transmembrane segments spans residues 62 to 82, 104 to 124, 153 to 173, 195 to 215, 222 to 242, 255 to 275, 300 to 320, 332 to 352, 390 to 410, 419 to 439, 450 to 470, and 472 to 492; these read ALLA…LYAL, LASL…VILI, WLFG…SIIT, IIIP…VLGT, FGPI…KGIF, FALE…GSVV, WLFF…ALLI, LLVP…ATVI, IYLP…VLAF, AYGI…MVVF, VAIV…ANVL, and IPDG…IMTT.

Belongs to the HAK/KUP transporter (TC 2.A.72) family.

It localises to the cell inner membrane. The catalysed reaction is K(+)(in) + H(+)(in) = K(+)(out) + H(+)(out). In terms of biological role, transport of potassium into the cell. Likely operates as a K(+):H(+) symporter. This chain is Probable potassium transport system protein Kup, found in Gluconobacter oxydans (strain 621H) (Gluconobacter suboxydans).